The primary structure comprises 239 residues: Endonuclease V (239 aa).

Mg(2+) is bound by residues Asp50 and Asp118.

This sequence belongs to the endonuclease V family. Requires Mg(2+) as cofactor.

It localises to the cytoplasm. The enzyme catalyses Endonucleolytic cleavage at apurinic or apyrimidinic sites to products with a 5'-phosphate.. DNA repair enzyme involved in the repair of deaminated bases. Selectively cleaves double-stranded DNA at the second phosphodiester bond 3' to a deoxyinosine leaving behind the intact lesion on the nicked DNA. The polypeptide is Endonuclease V (Xylella fastidiosa (strain 9a5c)).